Consider the following 299-residue polypeptide: Acetylglutamate kinase (299 aa).

Substrate is bound by residues 72–73, arginine 94, and asparagine 196; that span reads GG.

This sequence belongs to the acetylglutamate kinase family. ArgB subfamily.

The protein resides in the cytoplasm. The enzyme catalyses N-acetyl-L-glutamate + ATP = N-acetyl-L-glutamyl 5-phosphate + ADP. It functions in the pathway amino-acid biosynthesis; L-arginine biosynthesis; N(2)-acetyl-L-ornithine from L-glutamate: step 2/4. In terms of biological role, catalyzes the ATP-dependent phosphorylation of N-acetyl-L-glutamate. This chain is Acetylglutamate kinase, found in Burkholderia ambifaria (strain MC40-6).